The chain runs to 226 residues: Lysoplasmalogenase TMEM86B (226 aa).

Residues methionine 1–lysine 23 lie on the Cytoplasmic side of the membrane. The chain crosses the membrane as a helical span at residues tryptophan 24–isoleucine 40. At proline 41 to serine 46 the chain is on the extracellular side. Residues tryptophan 47–leucine 64 traverse the membrane as a helical segment. Residues arginine 65 to arginine 76 lie on the Cytoplasmic side of the membrane. A helical membrane pass occupies residues leucine 77–tryptophan 93. Residues proline 94 to histidine 99 lie on the Extracellular side of the membrane. A helical transmembrane segment spans residues glycine 100–leucine 117. Residues threonine 118–glycine 123 lie on the Cytoplasmic side of the membrane. The chain crosses the membrane as a helical span at residues leucine 124–leucine 140. The Extracellular portion of the chain corresponds to tryptophan 141–aspartate 146. The chain crosses the membrane as a helical span at residues leucine 147 to tryptophan 163. Over arginine 164–serine 171 the chain is Cytoplasmic. Residues threonine 172–tryptophan 188 form a helical membrane-spanning segment. Residues asparagine 189–arginine 199 are Extracellular-facing. Residues leucine 200 to valine 217 traverse the membrane as a helical segment. The Cytoplasmic portion of the chain corresponds to serine 218–asparagine 226.

Belongs to the TMEM86 family. In terms of assembly, homodimer.

It is found in the endoplasmic reticulum membrane. The protein resides in the cytoplasm. The enzyme catalyses a 1-O-(1Z-alkenyl)-sn-glycero-3-phosphocholine + H2O = a 2,3-saturated aldehyde + sn-glycerol 3-phosphocholine. The catalysed reaction is a 1-O-(1Z-alkenyl)-sn-glycero-3-phosphoethanolamine + H2O = a 2,3-saturated aldehyde + sn-glycero-3-phosphoethanolamine. Its activity is regulated as follows. Competitively inhibited by lysophosphatidic acid. In terms of biological role, catalyzes the hydrolysis of the vinyl ether bond of choline or ethanolamine lysoplasmalogens, forming fatty aldehyde and glycerophosphocholine or glycerophosphoethanolamine, respectively and is specific for the sn-2-deacylated (lyso) form of plasmalogen. The sequence is that of Lysoplasmalogenase TMEM86B (TMEM86B) from Sus scrofa (Pig).